The primary structure comprises 95 residues: Small ribosomal subunit protein uS15 (95 aa).

The protein belongs to the universal ribosomal protein uS15 family. As to quaternary structure, part of the 30S ribosomal subunit. Forms a bridge to the 50S subunit in the 70S ribosome, contacting the 23S rRNA.

In terms of biological role, one of the primary rRNA binding proteins, it binds directly to 16S rRNA where it helps nucleate assembly of the platform of the 30S subunit by binding and bridging several RNA helices of the 16S rRNA. Forms an intersubunit bridge (bridge B4) with the 23S rRNA of the 50S subunit in the ribosome. The protein is Small ribosomal subunit protein uS15 of Streptomyces avermitilis (strain ATCC 31267 / DSM 46492 / JCM 5070 / NBRC 14893 / NCIMB 12804 / NRRL 8165 / MA-4680).